The primary structure comprises 364 residues: Uroporphyrinogen decarboxylase (364 aa).

Substrate is bound by residues R28–R32, D78, Y160, T215, and H333.

Belongs to the uroporphyrinogen decarboxylase family. As to quaternary structure, homodimer.

Its subcellular location is the cytoplasm. It carries out the reaction uroporphyrinogen III + 4 H(+) = coproporphyrinogen III + 4 CO2. It functions in the pathway porphyrin-containing compound metabolism; protoporphyrin-IX biosynthesis; coproporphyrinogen-III from 5-aminolevulinate: step 4/4. In terms of biological role, catalyzes the decarboxylation of four acetate groups of uroporphyrinogen-III to yield coproporphyrinogen-III. The polypeptide is Uroporphyrinogen decarboxylase (Burkholderia cenocepacia (strain ATCC BAA-245 / DSM 16553 / LMG 16656 / NCTC 13227 / J2315 / CF5610) (Burkholderia cepacia (strain J2315))).